Reading from the N-terminus, the 93-residue chain is Neutrophil cationic peptide 1 type A (93 aa).

A signal peptide spans 1 to 19; it reads MRTVPLFAACLLLTLMAQA. The propeptide occupies 20-62; the sequence is EPLPRAADHSDTKMKGDREDHVAVISFWEEESTSLEDAGAGAG. Disulfide bonds link C65–C93, C67–C82, and C72–C92.

This sequence belongs to the alpha-defensin family.

Its subcellular location is the secreted. In terms of biological role, has antibiotic, anti-fungi and antiviral activity. The chain is Neutrophil cationic peptide 1 type A from Cavia porcellus (Guinea pig).